We begin with the raw amino-acid sequence, 886 residues long: MIIREIRLQNFLSHEDTTVKFEGSINVIIGNNGAGKSSIIDGILFGLFKRTNRDIGKNEELIKKGKKSGQVSIKFEINGDTYLIDRNVGETSRDTISLLKEGKIITLARQSTTVNNKIKEILGFDHKILMSTTIIGQGSVESVFSDFPEVMKELLKINKLEMLRESNGPIHSLIKVLTDRIRSLQSIKDILKREEAEIDRLKKEIEEIKVKLENIEREAKEKEDELNQYNTEFNRIKEIKVQYDILSGELSVVNKKIEEIALRLKDFEEKEKRYNKIETEVKELDENREKINTISSFKSILVQIDSLKSQINVVENDLKRKKEKLKRKKELEEKEKQYEEIEKRKKELEEKEKQYEEIEKRLTYVLKNIERQKNEIEKLNYVDTQDLENKIKDVSDRINQIDNELKGLLDRRGDLNGRKEQTLKIYNNLNSIEDDRCPICGRPLDSEHKAKIREEIKVQLLELNKQITALQARINSLIKEREELEATRNKLQLELQKRSKEKGIYEAKLKELQRLEEEKNKLQNEILSLLSYHQEFENIAEKEKELIDYHEEYLKNSDILEEDIQEQEQRLNELNSKLSELEKSYNDYKAKYQFLPADLKSLVSLEERIRRRISELEKLKIEYERLKEEITRMKGLKEEYEKLKEEEDALLNRISELGYSEKRYKQLEEIIDKLSKILSGIEADKGKIKGSLEEKIKNIEEKERNIEELRNKMNEESKLNLGISKLQKLREVLDNKHLQSHIMNIVRNQIENNVNEVIAKFDLSFSAVEIDFVGKSELYVYTASGQKIHINALSGGERISIALALRLAIAKALMNQFSTLILDEPTVNLDEYRRKELIDVIRSAIEIVPQIILVTHDQELIQAGDYIIRVEKKGDTSKVEVSSYDR.

Residues N32–S38 and Q137 each bind ATP. Coiled coils occupy residues I181 to K240 and R320 to N416. Residues I391–N489 form the Zinc-hook domain. Positions 437 and 440 each coordinate Zn(2+). Coiled-coil stretches lie at residues A450–L657 and E682–K718.

Belongs to the SMC family. RAD50 subfamily. In terms of assembly, homodimer. Forms a heterotetramer composed of two Mre11 subunits and two Rad50 subunits. Interacts with Mre11 and HerA. The cofactor is Zn(2+).

Part of the Rad50/Mre11 complex, which is involved in the early steps of DNA double-strand break (DSB) repair. The complex may facilitate opening of the processed DNA ends to aid in the recruitment of HerA and NurA. Rad50 controls the balance between DNA end bridging and DNA resection via ATP-dependent structural rearrangements of the Rad50/Mre11 complex. The chain is DNA double-strand break repair Rad50 ATPase from Sulfolobus acidocaldarius (strain ATCC 33909 / DSM 639 / JCM 8929 / NBRC 15157 / NCIMB 11770).